A 225-amino-acid polypeptide reads, in one-letter code: UPF0758 protein Vapar_4033 (225 aa).

Residues 103 to 225 (VFDSPGTVKQ…SYSMAEKGLL (123 aa)) enclose the MPN domain. Residues His174, His176, and Asp187 each contribute to the Zn(2+) site. Positions 174–187 (HNHPSGSIEPSRAD) match the JAMM motif motif.

This sequence belongs to the UPF0758 family.

The chain is UPF0758 protein Vapar_4033 from Variovorax paradoxus (strain S110).